Consider the following 205-residue polypeptide: uncharacterized protein (205 aa).

This is an uncharacterized protein from Sinorhizobium fredii (strain NBRC 101917 / NGR234).